The following is an 85-amino-acid chain: U4-theraphotoxin-Hhn1c (85 aa).

An N-terminal signal peptide occupies residues 1–22 (MKVTLIAIVTCAAVLVLHTTAA). Residues 23-48 (EELEAESQLMEVGMPDTELAAVDEER) constitute a propeptide that is removed on maturation. Intrachain disulfides connect Cys-52/Cys-66, Cys-56/Cys-77, and Cys-71/Cys-82.

It belongs to the neurotoxin 12 (Hwtx-2) family. 02 (Hwtx-2) subfamily. In terms of tissue distribution, expressed by the venom gland.

The protein resides in the secreted. In terms of biological role, postsynaptic neurotoxin. The chain is U4-theraphotoxin-Hhn1c from Cyriopagopus hainanus (Chinese bird spider).